A 164-amino-acid chain; its full sequence is Class I hydrophobin rodA (164 aa).

Residues 1-18 (MQFSISALVLGLAATVYA) form the signal peptide. The N-linked (GlcNAc...) asparagine glycan is linked to N50. Cystine bridges form between C60–C138, C68–C132, C69–C109, and C139–C157.

Belongs to the fungal hydrophobin family. As to quaternary structure, self-assembles to form functional amyloid fibrils called rodlets. Self-assembly into fibrillar rodlets occurs spontaneously at hydrophobic:hydrophilic interfaces and the rodlets further associate laterally to form amphipathic monolayers.

It localises to the secreted. The protein resides in the cell wall. Functionally, aerial growth, conidiation, and dispersal of filamentous fungi in the environment rely upon a capability of their secreting small amphipathic proteins called hydrophobins (HPBs) with low sequence identity. Class I can self-assemble into an outermost layer of rodlet bundles on aerial cell surfaces, conferring cellular hydrophobicity that supports fungal growth, development and dispersal; whereas Class II form highly ordered films at water-air interfaces through intermolecular interactions but contribute nothing to the rodlet structure. RodA is a class I hydrophobin involved in the cell surface hydrophobicity. The surface rodlet layer of the conidial cell wall makes airborne conidia of filamentous fungi inert to both innate and adaptive immunity. The chain is Class I hydrophobin rodA from Penicillium camemberti (strain FM 013).